The primary structure comprises 246 residues: 1-(5-phosphoribosyl)-5-[(5-phosphoribosylamino)methylideneamino] imidazole-4-carboxamide isomerase (246 aa).

Asp-8 acts as the Proton acceptor in catalysis. The active-site Proton donor is Asp-131.

It belongs to the HisA/HisF family.

The protein resides in the cytoplasm. It carries out the reaction 1-(5-phospho-beta-D-ribosyl)-5-[(5-phospho-beta-D-ribosylamino)methylideneamino]imidazole-4-carboxamide = 5-[(5-phospho-1-deoxy-D-ribulos-1-ylimino)methylamino]-1-(5-phospho-beta-D-ribosyl)imidazole-4-carboxamide. The protein operates within amino-acid biosynthesis; L-histidine biosynthesis; L-histidine from 5-phospho-alpha-D-ribose 1-diphosphate: step 4/9. The polypeptide is 1-(5-phosphoribosyl)-5-[(5-phosphoribosylamino)methylideneamino] imidazole-4-carboxamide isomerase (Lactococcus lactis subsp. cremoris (strain MG1363)).